We begin with the raw amino-acid sequence, 519 residues long: Ribose import ATP-binding protein RbsA 2 (519 aa).

ABC transporter domains lie at 15–252 and 262–506; these read FRLR…VGRP and HEPG…TGVR. 47-54 provides a ligand contact to ATP; that stretch reads GENGAGKS.

Belongs to the ABC transporter superfamily. Ribose importer (TC 3.A.1.2.1) family. In terms of assembly, the complex is composed of an ATP-binding protein (RbsA), two transmembrane proteins (RbsC) and a solute-binding protein (RbsB).

The protein resides in the cell membrane. It carries out the reaction D-ribose(out) + ATP + H2O = D-ribose(in) + ADP + phosphate + H(+). In terms of biological role, part of the ABC transporter complex RbsABC involved in ribose import. Responsible for energy coupling to the transport system. This Rubrobacter xylanophilus (strain DSM 9941 / JCM 11954 / NBRC 16129 / PRD-1) protein is Ribose import ATP-binding protein RbsA 2.